A 120-amino-acid polypeptide reads, in one-letter code: uncharacterized protein (120 aa).

This is an uncharacterized protein from Methanocaldococcus jannaschii (strain ATCC 43067 / DSM 2661 / JAL-1 / JCM 10045 / NBRC 100440) (Methanococcus jannaschii).